Consider the following 349-residue polypeptide: DNA integrity scanning protein DisA (349 aa).

Positions 3-143 (KQDLMDIIVK…LKYRLKNFDE (141 aa)) constitute a DAC domain. ATP is bound by residues Gly-70, Val-88, and 101 to 105 (TRHRT).

Belongs to the DisA family. As to quaternary structure, homooctamer. Mg(2+) is required as a cofactor.

It catalyses the reaction 2 ATP = 3',3'-c-di-AMP + 2 diphosphate. Functionally, participates in a DNA-damage check-point. DisA forms globular foci that rapidly scan along the chromosomes searching for lesions. Also has diadenylate cyclase activity, catalyzing the condensation of 2 ATP molecules into cyclic di-AMP (c-di-AMP). c-di-AMP likely acts as a signaling molecule that may couple DNA integrity with a cellular process. The polypeptide is DNA integrity scanning protein DisA (Fusobacterium nucleatum subsp. nucleatum (strain ATCC 25586 / DSM 15643 / BCRC 10681 / CIP 101130 / JCM 8532 / KCTC 2640 / LMG 13131 / VPI 4355)).